Reading from the N-terminus, the 378-residue chain is tRNA (guanine(26)-N(2))-dimethyltransferase (378 aa).

Positions 4 to 374 (KEVTEGKVRI…KEYEEITKCI (371 aa)) constitute a Trm1 methyltransferase domain. The S-adenosyl-L-methionine site is built by R44, R69, D87, D114, and A115. Zn(2+)-binding residues include C246, C249, C263, and C266.

This sequence belongs to the class I-like SAM-binding methyltransferase superfamily. Trm1 family.

It catalyses the reaction guanosine(26) in tRNA + 2 S-adenosyl-L-methionine = N(2)-dimethylguanosine(26) in tRNA + 2 S-adenosyl-L-homocysteine + 2 H(+). In terms of biological role, dimethylates a single guanine residue at position 26 of a number of tRNAs using S-adenosyl-L-methionine as donor of the methyl groups. This is tRNA (guanine(26)-N(2))-dimethyltransferase from Saccharolobus solfataricus (strain ATCC 35092 / DSM 1617 / JCM 11322 / P2) (Sulfolobus solfataricus).